The chain runs to 72 residues: NAD(P)H-quinone oxidoreductase subunit O (72 aa).

This sequence belongs to the complex I NdhO subunit family. As to quaternary structure, NDH-1 can be composed of about 15 different subunits; different subcomplexes with different compositions have been identified which probably have different functions.

Its subcellular location is the cellular thylakoid membrane. It carries out the reaction a plastoquinone + NADH + (n+1) H(+)(in) = a plastoquinol + NAD(+) + n H(+)(out). The enzyme catalyses a plastoquinone + NADPH + (n+1) H(+)(in) = a plastoquinol + NADP(+) + n H(+)(out). NDH-1 shuttles electrons from an unknown electron donor, via FMN and iron-sulfur (Fe-S) centers, to quinones in the respiratory and/or the photosynthetic chain. The immediate electron acceptor for the enzyme in this species is believed to be plastoquinone. Couples the redox reaction to proton translocation, and thus conserves the redox energy in a proton gradient. Cyanobacterial NDH-1 also plays a role in inorganic carbon-concentration. This chain is NAD(P)H-quinone oxidoreductase subunit O, found in Gloeothece citriformis (strain PCC 7424) (Cyanothece sp. (strain PCC 7424)).